The chain runs to 159 residues: MPTPKKGPRLGGSASQQKHLLSNMAASLIEHGAIKTTDAKAKVLRPYIEKIITKAKAGTVADRRAVLKLIPHKDVVAYLFDELAPKFENREGGYTRIIKLENRSGDNAPMSQISLVLEETVTSEANRATRAAASKQAEEAKAEEAEATEAEAEETTEEK.

Over residues 124–135 (EANRATRAAASK) the composition is skewed to low complexity. Positions 124 to 159 (EANRATRAAASKQAEEAKAEEAEATEAEAEETTEEK) are disordered. The segment covering 145–159 (AEATEAEAEETTEEK) has biased composition (acidic residues).

It belongs to the bacterial ribosomal protein bL17 family. As to quaternary structure, part of the 50S ribosomal subunit. Contacts protein L32.

The polypeptide is Large ribosomal subunit protein bL17 (Corynebacterium aurimucosum (strain ATCC 700975 / DSM 44827 / CIP 107346 / CN-1) (Corynebacterium nigricans)).